The chain runs to 154 residues: uncharacterized protein (154 aa).

Positions 7-143 (RSELEKTAVQ…IFSFVGKAAD (137 aa)) constitute an HTH marR-type domain. A DNA-binding region (H-T-H motif) is located at residues 57–80 (AGELGKKTGLSTGSVTALVDRLEK).

This is an uncharacterized protein from Bacillus subtilis (strain 168).